The primary structure comprises 138 residues: Nucleoside diphosphate kinase (138 aa).

6 residues coordinate ATP: lysine 10, phenylalanine 58, arginine 86, threonine 92, arginine 103, and asparagine 113. Catalysis depends on histidine 116, which acts as the Pros-phosphohistidine intermediate.

It belongs to the NDK family. Homotetramer. It depends on Mg(2+) as a cofactor.

The protein resides in the cytoplasm. It carries out the reaction a 2'-deoxyribonucleoside 5'-diphosphate + ATP = a 2'-deoxyribonucleoside 5'-triphosphate + ADP. It catalyses the reaction a ribonucleoside 5'-diphosphate + ATP = a ribonucleoside 5'-triphosphate + ADP. Functionally, major role in the synthesis of nucleoside triphosphates other than ATP. The ATP gamma phosphate is transferred to the NDP beta phosphate via a ping-pong mechanism, using a phosphorylated active-site intermediate. The sequence is that of Nucleoside diphosphate kinase from Actinobacillus pleuropneumoniae serotype 7 (strain AP76).